A 219-amino-acid chain; its full sequence is Large ribosomal subunit protein uL1 (219 aa).

The protein belongs to the universal ribosomal protein uL1 family. As to quaternary structure, component of the large ribosomal subunit.

The protein localises to the cytoplasm. This is Large ribosomal subunit protein uL1 (RPL1) from Encephalitozoon cuniculi (strain GB-M1) (Microsporidian parasite).